The primary structure comprises 771 residues: Assimilatory nitrate reductase electron transfer subunit (771 aa).

Position 43–79 (43–79) interacts with FAD; the sequence is YNRILLSSVLQGEASLDDITLNSKDWYDKHGITLYTG. Residues Cys-414, Cys-416, Cys-449, and Cys-452 each coordinate [2Fe-2S] cluster.

The cofactor is FAD. [2Fe-2S] cluster serves as cofactor.

Functionally, required for nitrate assimilation. The polypeptide is Assimilatory nitrate reductase electron transfer subunit (nasB) (Bacillus subtilis (strain 168)).